A 226-amino-acid chain; its full sequence is Neuron-specific vesicular protein calcyon (226 aa).

Positions Met1–Gly21 are disordered. At Met1 to Arg88 the chain is on the extracellular side. Residues Met89 to Tyr109 form a helical membrane-spanning segment. Topologically, residues Asp110 to Lys226 are cytoplasmic. The interval His177–Lys226 is disordered. Positions Ala183–Ala196 are enriched in low complexity. Residues Leu206–Lys216 are compositionally biased toward basic and acidic residues.

Belongs to the NSG family. As to quaternary structure, interacts with CLTA. As to expression, most abundant in brain. Also expressed in testis and ovary and, at much lower levels, in kidney and heart.

It localises to the cytoplasmic vesicle membrane. Its subcellular location is the cell membrane. Its function is as follows. Interacts with clathrin light chain A and stimulates clathrin self-assembly and clathrin-mediated endocytosis. This is Neuron-specific vesicular protein calcyon (Caly) from Mus musculus (Mouse).